Reading from the N-terminus, the 365-residue chain is P43 5S RNA-binding protein (365 aa).

C2H2-type zinc fingers lie at residues 15-39, 45-69, 75-100, 106-130, 136-160, 163-187, 191-213, 220-245, and 251-275; these read FRCPAAGCKAVYRKEGKLRDHMAGH, WKCGKKDCGKMFARKRQIQKHMKRH, HSCPTAGCKMTFSTKKSLSRHKLYKH, LKCSVPGCKRSFRKKRALRIHVSEH, SVCDVPGCGWKSTSAAKLAAHHRRH, YRCSYEDCQTVSPTWTALQTHLKKH, LQCAACKKPFKKASALRRHKATH, LPCPRQDCDKIFSTVFNLTHHLRKVH, and HRCPHSNCTRSFAMRESLVRHLVVH.

As to quaternary structure, the 42S RNP particle comprises four subunits each of which contains one molecule of 5S RNA, three molecules of tRNA, two molecules of p50 (EF1-alpha) and one molecule of the 5S RNA binding protein 43.

In terms of biological role, p43 is a 5S RNA binding protein which is a major constituent of oocytes and comprises part of a 42S ribonucleoprotein storage particle. The protein is P43 5S RNA-binding protein of Xenopus borealis (Kenyan clawed frog).